A 285-amino-acid polypeptide reads, in one-letter code: NAD kinase (285 aa).

Residue D67 is the Proton acceptor of the active site. NAD(+) is bound by residues 67–68, 141–142, R152, K169, D171, 182–187, and Q242; these read DG, ND, and TGYSLS.

This sequence belongs to the NAD kinase family. The cofactor is a divalent metal cation.

The protein localises to the cytoplasm. It carries out the reaction NAD(+) + ATP = ADP + NADP(+) + H(+). In terms of biological role, involved in the regulation of the intracellular balance of NAD and NADP, and is a key enzyme in the biosynthesis of NADP. Catalyzes specifically the phosphorylation on 2'-hydroxyl of the adenosine moiety of NAD to yield NADP. The protein is NAD kinase of Trichlorobacter lovleyi (strain ATCC BAA-1151 / DSM 17278 / SZ) (Geobacter lovleyi).